A 384-amino-acid polypeptide reads, in one-letter code: tRNA-specific 2-thiouridylase MnmA (384 aa).

ATP-binding positions include 18 to 25 (AMSGGVDS) and leucine 44. The active-site Nucleophile is cysteine 112. Residues cysteine 112 and cysteine 209 are joined by a disulfide bond. Glycine 136 provides a ligand contact to ATP. An interaction with tRNA region spans residues 159 to 161 (RDQ). Residue cysteine 209 is the Cysteine persulfide intermediate of the active site.

This sequence belongs to the MnmA/TRMU family.

It localises to the cytoplasm. It carries out the reaction S-sulfanyl-L-cysteinyl-[protein] + uridine(34) in tRNA + AH2 + ATP = 2-thiouridine(34) in tRNA + L-cysteinyl-[protein] + A + AMP + diphosphate + H(+). Functionally, catalyzes the 2-thiolation of uridine at the wobble position (U34) of tRNA, leading to the formation of s(2)U34. This chain is tRNA-specific 2-thiouridylase MnmA, found in Methylobacterium radiotolerans (strain ATCC 27329 / DSM 1819 / JCM 2831 / NBRC 15690 / NCIMB 10815 / 0-1).